The chain runs to 243 residues: Segregation and condensation protein A (243 aa).

Belongs to the ScpA family. Component of a cohesin-like complex composed of ScpA, ScpB and the Smc homodimer, in which ScpA and ScpB bind to the head domain of Smc. The presence of the three proteins is required for the association of the complex with DNA.

It is found in the cytoplasm. Functionally, participates in chromosomal partition during cell division. May act via the formation of a condensin-like complex containing Smc and ScpB that pull DNA away from mid-cell into both cell halves. The polypeptide is Segregation and condensation protein A (Staphylococcus aureus (strain NCTC 8325 / PS 47)).